Consider the following 470-residue polypeptide: ATP synthase subunit beta (470 aa).

158–165 contacts ATP; sequence GGAGVGKT.

The protein belongs to the ATPase alpha/beta chains family. In terms of assembly, F-type ATPases have 2 components, CF(1) - the catalytic core - and CF(0) - the membrane proton channel. CF(1) has five subunits: alpha(3), beta(3), gamma(1), delta(1), epsilon(1). CF(0) has three main subunits: a(1), b(2) and c(9-12). The alpha and beta chains form an alternating ring which encloses part of the gamma chain. CF(1) is attached to CF(0) by a central stalk formed by the gamma and epsilon chains, while a peripheral stalk is formed by the delta and b chains.

Its subcellular location is the cell membrane. It carries out the reaction ATP + H2O + 4 H(+)(in) = ADP + phosphate + 5 H(+)(out). Functionally, produces ATP from ADP in the presence of a proton gradient across the membrane. The catalytic sites are hosted primarily by the beta subunits. This is ATP synthase subunit beta from Shouchella clausii (strain KSM-K16) (Alkalihalobacillus clausii).